A 1770-amino-acid chain; its full sequence is Transposon Ty2-OR1 Gag-Pol polyprotein (1770 aa).

Composition is skewed to polar residues over residues 1–39 (MESQ…SASN) and 49–60 (KVNSQQETTPGT). Disordered stretches follow at residues 1–88 (MESQ…YQQH) and 359–449 (QHSE…SNDE). An RNA-binding region spans residues 295–397 (ENNINVSDRL…SSKPRAAKAH (103 aa)). Positions 369–381 (TSPNTTNTKVTTR) are enriched in low complexity. Composition is skewed to polar residues over residues 399-408 (IATSSKFSRV) and 415-435 (ESTV…GQQQ). The For protease activity; shared with dimeric partner role is filled by Asp-457. The segment at 579 to 636 (NVNKSKSVNKYPYPLIHRMLGHANFRSIQKSLKKNAVTYLKESDIEWSNASTYQCPDC) is integrase-type zinc finger-like. Positions 656–831 (ESYEPFQYLH…AGLDITTILP (176 aa)) constitute an Integrase catalytic domain. The Mg(2+) site is built by Asp-667 and Asp-732. Composition is skewed to polar residues over residues 916–929 (FIEQ…YDQN), 1009–1024 (ESDT…FTAR), and 1065–1082 (QRNS…STPS). 3 disordered regions span residues 916–935 (FIEQ…SDHD), 1005–1038 (GGTI…MIDL), and 1057–1205 (GGTE…TEIE). A Bipartite nuclear localization signal motif is present at residues 1193 to 1227 (KKRSLEDNETEIEVSRDTWNNKNMRSLEPPRSKKR). A Reverse transcriptase Ty1/copia-type domain is found at 1353–1491 (NDYYITQLDI…DILGLEIKYQ (139 aa)). Mg(2+) contacts are provided by Asp-1361, Asp-1442, Asp-1443, Asp-1625, Glu-1667, and Asp-1700. The RNase H Ty1/copia-type domain maps to 1625–1767 (DASYGNQPYY…IKTFKLLTNK (143 aa)).

The capsid protein forms a homotrimer, from which the VLPs are assembled. The protease is a homodimer, whose active site consists of two apposed aspartic acid residues. Post-translationally, initially, virus-like particles (VLPs) are composed of the structural unprocessed proteins Gag and Gag-Pol, and also contain the host initiator methionine tRNA (tRNA(i)-Met) which serves as a primer for minus-strand DNA synthesis, and a dimer of genomic Ty RNA. Processing of the polyproteins occurs within the particle and proceeds by an ordered pathway, called maturation. First, the protease (PR) is released by autocatalytic cleavage of the Gag-Pol polyprotein, and this cleavage is a prerequisite for subsequent processing at the remaining sites to release the mature structural and catalytic proteins. Maturation takes place prior to the RT reaction and is required to produce transposition-competent VLPs.

Its subcellular location is the cytoplasm. The protein localises to the nucleus. The catalysed reaction is DNA(n) + a 2'-deoxyribonucleoside 5'-triphosphate = DNA(n+1) + diphosphate. It catalyses the reaction Endonucleolytic cleavage to 5'-phosphomonoester.. Functionally, capsid protein (CA) is the structural component of the virus-like particle (VLP), forming the shell that encapsulates the retrotransposons dimeric RNA genome. The particles are assembled from trimer-clustered units and there are holes in the capsid shells that allow for the diffusion of macromolecules. CA also has nucleocapsid-like chaperone activity, promoting primer tRNA(i)-Met annealing to the multipartite primer-binding site (PBS), dimerization of Ty2 RNA and initiation of reverse transcription. In terms of biological role, the aspartyl protease (PR) mediates the proteolytic cleavages of the Gag and Gag-Pol polyproteins after assembly of the VLP. Reverse transcriptase/ribonuclease H (RT) is a multifunctional enzyme that catalyzes the conversion of the retro-elements RNA genome into dsDNA within the VLP. The enzyme displays a DNA polymerase activity that can copy either DNA or RNA templates, and a ribonuclease H (RNase H) activity that cleaves the RNA strand of RNA-DNA heteroduplexes during plus-strand synthesis and hydrolyzes RNA primers. The conversion leads to a linear dsDNA copy of the retrotransposon that includes long terminal repeats (LTRs) at both ends. Its function is as follows. Integrase (IN) targets the VLP to the nucleus, where a subparticle preintegration complex (PIC) containing at least integrase and the newly synthesized dsDNA copy of the retrotransposon must transit the nuclear membrane. Once in the nucleus, integrase performs the integration of the dsDNA into the host genome. In Saccharomyces cerevisiae (strain ATCC 204508 / S288c) (Baker's yeast), this protein is Transposon Ty2-OR1 Gag-Pol polyprotein (TY2B-OR1).